The following is a 37-amino-acid chain: Cytochrome b6-f complex subunit 5 (37 aa).

The chain crosses the membrane as a helical span at residues phenylalanine 5–alanine 25.

This sequence belongs to the PetG family. In terms of assembly, the 4 large subunits of the cytochrome b6-f complex are cytochrome b6, subunit IV (17 kDa polypeptide, PetD), cytochrome f and the Rieske protein, while the 4 small subunits are PetG, PetL, PetM and PetN. The complex functions as a dimer.

The protein resides in the plastid. Its subcellular location is the chloroplast thylakoid membrane. Functionally, component of the cytochrome b6-f complex, which mediates electron transfer between photosystem II (PSII) and photosystem I (PSI), cyclic electron flow around PSI, and state transitions. PetG is required for either the stability or assembly of the cytochrome b6-f complex. The protein is Cytochrome b6-f complex subunit 5 of Phalaenopsis aphrodite subsp. formosana (Moth orchid).